A 310-amino-acid polypeptide reads, in one-letter code: Glycine--tRNA ligase alpha subunit (310 aa).

This sequence belongs to the class-II aminoacyl-tRNA synthetase family. As to quaternary structure, tetramer of two alpha and two beta subunits.

It localises to the cytoplasm. The enzyme catalyses tRNA(Gly) + glycine + ATP = glycyl-tRNA(Gly) + AMP + diphosphate. In Aliivibrio salmonicida (strain LFI1238) (Vibrio salmonicida (strain LFI1238)), this protein is Glycine--tRNA ligase alpha subunit.